A 225-amino-acid polypeptide reads, in one-letter code: Protein GrpE (225 aa).

Disordered stretches follow at residues 1 to 44 and 183 to 225; these read MTEE…ENAG and VAVA…PDEG.

This sequence belongs to the GrpE family. Homodimer.

The protein resides in the cytoplasm. In terms of biological role, participates actively in the response to hyperosmotic and heat shock by preventing the aggregation of stress-denatured proteins, in association with DnaK and GrpE. It is the nucleotide exchange factor for DnaK and may function as a thermosensor. Unfolded proteins bind initially to DnaJ; upon interaction with the DnaJ-bound protein, DnaK hydrolyzes its bound ATP, resulting in the formation of a stable complex. GrpE releases ADP from DnaK; ATP binding to DnaK triggers the release of the substrate protein, thus completing the reaction cycle. Several rounds of ATP-dependent interactions between DnaJ, DnaK and GrpE are required for fully efficient folding. The protein is Protein GrpE of Streptomyces coelicolor (strain ATCC BAA-471 / A3(2) / M145).